We begin with the raw amino-acid sequence, 188 residues long: Elongation factor P (188 aa).

This sequence belongs to the elongation factor P family.

The protein localises to the cytoplasm. The protein operates within protein biosynthesis; polypeptide chain elongation. Involved in peptide bond synthesis. Stimulates efficient translation and peptide-bond synthesis on native or reconstituted 70S ribosomes in vitro. Probably functions indirectly by altering the affinity of the ribosome for aminoacyl-tRNA, thus increasing their reactivity as acceptors for peptidyl transferase. The protein is Elongation factor P of Nitrobacter hamburgensis (strain DSM 10229 / NCIMB 13809 / X14).